Reading from the N-terminus, the 82-residue chain is UPF0154 protein SMU_1719c (82 aa).

Residues 4-24 (FLWILLVIIALLAGLVGGTFI) form a helical membrane-spanning segment.

It belongs to the UPF0154 family.

It localises to the membrane. The sequence is that of UPF0154 protein SMU_1719c from Streptococcus mutans serotype c (strain ATCC 700610 / UA159).